Reading from the N-terminus, the 301-residue chain is tRNA dimethylallyltransferase (301 aa).

Residue 8-15 (GATGTGKS) coordinates ATP. 10–15 (TGTGKS) contributes to the substrate binding site. Residues 33-36 (DSMQ) are interaction with substrate tRNA.

The protein belongs to the IPP transferase family. In terms of assembly, monomer. Requires Mg(2+) as cofactor.

The enzyme catalyses adenosine(37) in tRNA + dimethylallyl diphosphate = N(6)-dimethylallyladenosine(37) in tRNA + diphosphate. Functionally, catalyzes the transfer of a dimethylallyl group onto the adenine at position 37 in tRNAs that read codons beginning with uridine, leading to the formation of N6-(dimethylallyl)adenosine (i(6)A). The polypeptide is tRNA dimethylallyltransferase (Tropheryma whipplei (strain Twist) (Whipple's bacillus)).